Here is a 217-residue protein sequence, read N- to C-terminus: Ras-like protein (217 aa).

Residue 17-24 participates in GTP binding; the sequence is GGGGVGKS. The Effector region motif lies at 39-47; that stretch reads YDPTIEDSY. Residues 64-68 and 123-126 each bind GTP; these read DTAGQ and NKCD. A disordered region spans residues 181–200; the sequence is TGRMMTGGGGGGPPGTYAGK. A compositionally biased stretch (gly residues) spans 185 to 194; the sequence is MTGGGGGGPP. S-palmitoyl cysteine attachment occurs at residues Cys210 and Cys211. Position 214 is a cysteine methyl ester (Cys214). Cys214 is lipidated: S-geranylgeranyl cysteine. A propeptide spans 215-217 (removed in mature form); the sequence is VVL.

The protein belongs to the small GTPase superfamily. Ras family.

Its subcellular location is the cell membrane. It carries out the reaction GTP + H2O = GDP + phosphate + H(+). With respect to regulation, alternates between an inactive form bound to GDP and an active form bound to GTP. Activated by a guanine nucleotide-exchange factor (GEF) and inactivated by a GTPase-activating protein (GAP). This chain is Ras-like protein, found in Lentinula edodes (Shiitake mushroom).